The following is a 200-amino-acid chain: Proteasome subunit beta 2 (200 aa).

The propeptide at 1 to 10 (MSDQLELMTG) is removed in mature form; by autocatalysis. Thr-11 acts as the Nucleophile in catalysis.

It belongs to the peptidase T1B family. As to quaternary structure, the 20S proteasome core is composed of 14 alpha and 14 beta subunits that assemble into four stacked heptameric rings, resulting in a barrel-shaped structure. The two inner rings, each composed of seven catalytic beta subunits, are sandwiched by two outer rings, each composed of seven alpha subunits. The catalytic chamber with the active sites is on the inside of the barrel. Has a gated structure, the ends of the cylinder being occluded by the N-termini of the alpha-subunits. Is capped at one or both ends by the proteasome regulatory ATPase, PAN.

The protein localises to the cytoplasm. It catalyses the reaction Cleavage of peptide bonds with very broad specificity.. Its activity is regulated as follows. The formation of the proteasomal ATPase PAN-20S proteasome complex, via the docking of the C-termini of PAN into the intersubunit pockets in the alpha-rings, triggers opening of the gate for substrate entry. Interconversion between the open-gate and close-gate conformations leads to a dynamic regulation of the 20S proteasome proteolysis activity. Its function is as follows. Component of the proteasome core, a large protease complex with broad specificity involved in protein degradation. This Caldivirga maquilingensis (strain ATCC 700844 / DSM 13496 / JCM 10307 / IC-167) protein is Proteasome subunit beta 2.